A 336-amino-acid chain; its full sequence is Atypical chemokine receptor 1 (336 aa).

At 1–63 (MGNCLHQAEL…CSLLNDSSLP (63 aa)) the chain is on the extracellular side. Residues Asn-16, Asn-27, Asn-33, and Asn-58 are each glycosylated (N-linked (GlcNAc...) asparagine). Cystine bridges form between Cys-51–Cys-276 and Cys-129–Cys-195. Residues 64 to 84 (FFILASDLGILASSTVLFMLF) traverse the membrane as a helical segment. The Cytoplasmic segment spans residues 85–95 (RPLFRWQLCPG). Residues 96-116 (WPVLAQLAVGSALFSIVVPIL) traverse the membrane as a helical segment. Over 117–129 (APGLGNTHSSALC) the chain is Extracellular. The helical transmembrane segment at 130-153 (SLGYCVWYGSAFAQALLLGCHASL) threads the bilayer. The Cytoplasmic segment spans residues 154–166 (GPKLGAGQVPGLT). A helical membrane pass occupies residues 167–187 (LGLPVGLWGATALLTLPITLA). Residues 188–207 (SGASDGLCTPIYSTELEALQ) are Extracellular-facing. A helical transmembrane segment spans residues 208-228 (ATHAVACFAIFVLLPLGLFGA). Topologically, residues 229–244 (KGLKKALGMGPGPWMN) are cytoplasmic. A helical transmembrane segment spans residues 245–265 (ILWVWFIFWWPHGLVLGLDFL). The Extracellular portion of the chain corresponds to 266–287 (VGSKLSLLPTCLAQQVLDLLLN). Residues 288-308 (LAEALAIVHCVATPLLLALFC) traverse the membrane as a helical segment. Residues 309–336 (HQTTRTLLPSLPLPERWSSPVDTLGSKS) lie on the Cytoplasmic side of the membrane.

This sequence belongs to the G-protein coupled receptor 1 family. Atypical chemokine receptor subfamily.

The protein resides in the early endosome. Its subcellular location is the recycling endosome. The protein localises to the membrane. Functionally, atypical chemokine receptor that controls chemokine levels and localization via high-affinity chemokine binding that is uncoupled from classic ligand-driven signal transduction cascades, resulting instead in chemokine sequestration, degradation, or transcytosis. Also known as interceptor (internalizing receptor) or chemokine-scavenging receptor or chemokine decoy receptor. Has a promiscuous chemokine-binding profile, interacting with inflammatory chemokines of both the CXC and the CC subfamilies but not with homeostatic chemokines. Acts as a receptor for chemokines including CCL2, CCL5, CCL7, CCL11, CCL13, CCL14, CCL17, CXCL5, CXCL6, IL8/CXCL8, CXCL11, GRO, RANTES, MCP-1 and TARC. May regulate chemokine bioavailability and, consequently, leukocyte recruitment through two distinct mechanisms: when expressed in endothelial cells, it sustains the abluminal to luminal transcytosis of tissue-derived chemokines and their subsequent presentation to circulating leukocytes; when expressed in erythrocytes, serves as blood reservoir of cognate chemokines but also as a chemokine sink, buffering potential surges in plasma chemokine levels. This is Atypical chemokine receptor 1 (ACKR1) from Saimiri boliviensis boliviensis (Bolivian squirrel monkey).